The following is a 308-amino-acid chain: Shikimate kinase 1, chloroplastic (308 aa).

The N-terminal 62 residues, 1 to 62 (MEAGVGLALQ…RGSKPVAPLR (62 aa)), are a transit peptide targeting the chloroplast. 103–110 (GMMGSGKS) contacts ATP. S110 lines the Mg(2+) pocket. Substrate is bound by residues D128, R153, and G175. R214 is a binding site for ATP.

This sequence belongs to the shikimate kinase family. Mg(2+) is required as a cofactor. Expressed in panicles.

The protein localises to the plastid. It is found in the chloroplast. It catalyses the reaction shikimate + ATP = 3-phosphoshikimate + ADP + H(+). The protein operates within metabolic intermediate biosynthesis; chorismate biosynthesis; chorismate from D-erythrose 4-phosphate and phosphoenolpyruvate: step 5/7. In terms of biological role, catalyzes the specific phosphorylation of the 3-hydroxyl group of shikimic acid using ATP as a cosubstrate. In Oryza sativa subsp. japonica (Rice), this protein is Shikimate kinase 1, chloroplastic (SK1).